We begin with the raw amino-acid sequence, 121 residues long: Large ribosomal subunit protein uL18 (121 aa).

The protein belongs to the universal ribosomal protein uL18 family. Part of the 50S ribosomal subunit; part of the 5S rRNA/L5/L18/L25 subcomplex. Contacts the 5S and 23S rRNAs.

Functionally, this is one of the proteins that bind and probably mediate the attachment of the 5S RNA into the large ribosomal subunit, where it forms part of the central protuberance. The protein is Large ribosomal subunit protein uL18 of Verminephrobacter eiseniae (strain EF01-2).